The primary structure comprises 249 residues: uncharacterized protein (249 aa).

An N-terminal signal peptide occupies residues 1–25 (MRYLNTKNIIAAGVLLSCMSSIAWG).

Belongs to the periplasmic pilus chaperone family.

The protein localises to the periplasm. Could be required for the biogenesis of a putative fimbria. This is an uncharacterized protein from Escherichia coli (strain K12).